Here is a 331-residue protein sequence, read N- to C-terminus: NADH-quinone oxidoreductase subunit H (331 aa).

8 helical membrane-spanning segments follow: residues 7–27, 81–101, 114–134, 154–174, 187–207, 238–258, 271–291, and 310–330; these read ALVTIILTVVKAIVVLLAVVI, MIFTLAPVIAMGALLVAFAIV, IGILFFFAMAGLTVYAVLFAG, ISYEVFLALSLMGIVAQVGSF, VWFIIPQFFGFCTFIIAGVAV, FFVGEYIGIVLVSALLATLFF, WLSFFYFAAKTGFFIMLFILI, and VCLPLTLINLLVTGALVLAAA.

The protein belongs to the complex I subunit 1 family. As to quaternary structure, NDH-1 is composed of 13 different subunits. Subunits NuoA, H, J, K, L, M, N constitute the membrane sector of the complex.

The protein localises to the cell inner membrane. It catalyses the reaction a quinone + NADH + 5 H(+)(in) = a quinol + NAD(+) + 4 H(+)(out). Functionally, NDH-1 shuttles electrons from NADH, via FMN and iron-sulfur (Fe-S) centers, to quinones in the respiratory chain. The immediate electron acceptor for the enzyme in this species is believed to be ubiquinone. Couples the redox reaction to proton translocation (for every two electrons transferred, four hydrogen ions are translocated across the cytoplasmic membrane), and thus conserves the redox energy in a proton gradient. This subunit may bind ubiquinone. The chain is NADH-quinone oxidoreductase subunit H from Pseudomonas paraeruginosa (strain DSM 24068 / PA7) (Pseudomonas aeruginosa (strain PA7)).